The following is a 317-amino-acid chain: Insulin-like growth factor-binding protein 2 (317 aa).

A signal peptide spans 1 to 33 (MQPRLGGPALLLLPPLLLLLLLGAGGGDCGARA). The IGFBP N-terminal domain maps to 35 to 126 (VLFRCPPCTP…VHGEGTCEKH (92 aa)). 6 disulfide bridges follow: C39–C76, C42–C78, C50–C79, C68–C82, C90–C103, and C97–C123. 2 disordered regions span residues 126–146 (HGDA…EEHS) and 190–218 (QHRQ…ARTP). One can recognise a Thyroglobulin type-1 domain in the interval 216–298 (RTPCQQELDQ…APTIRGDPEC (83 aa)). Cystine bridges form between C219-C253, C264-C275, and C277-C298. The Cell attachment site motif lies at 293–295 (RGD).

In terms of assembly, interacts with IGF1. Interacts with IGF2. Interacts (via RGD motif) with integrin alpha5/ITGA5; this interaction induces cell migration, adhesion or apoptosis according to the context. Interacts with PTPRB; this interaction leads to PTPRB dimerization and inactivation. Cleaved by MMP9 leading to release of free IGF2 from IGFBP2-IGF2 complex, which contributes to enhance the motility and the growth of astrocytes. Post-translationally, O-glycosylated.

Its subcellular location is the secreted. In terms of biological role, multifunctional protein that plays a critical role in regulating the availability of IGFs such as IGF1 and IGF2 to their receptors and thereby regulates IGF-mediated cellular processes including proliferation, differentiation, and apoptosis in a cell-type specific manner. Functions coordinately with receptor protein tyrosine phosphatase beta/PTPRB and the IGF1 receptor to regulate IGF1-mediated signaling by stimulating the phosphorylation of PTEN leading to its inactivation and AKT1 activation. Plays a positive role in cell migration via interaction with integrin alpha5/ITGA5 through an RGD motif. Additionally, interaction with ITGA5/ITGB1 enhances the adhesion of endothelial progenitor cells to endothelial cells. Upon mitochondrial damage, facilitates apoptosis with ITGA5 of podocytes, and then activates the phosphorylation of focal adhesion kinase (FAK)-mediated mitochondrial injury. The sequence is that of Insulin-like growth factor-binding protein 2 (IGFBP2) from Bos taurus (Bovine).